A 70-amino-acid polypeptide reads, in one-letter code: Small ribosomal subunit protein bS21 (70 aa).

It belongs to the bacterial ribosomal protein bS21 family.

The chain is Small ribosomal subunit protein bS21 from Campylobacter fetus subsp. fetus (strain 82-40).